The sequence spans 572 residues: MYRVLSKLSSSIGSSTSRKLVSGRIISSRNYAAKDISFGIGARAAMLQGVSEVAEAVKVTMGPKGRNVIIESSYGGPKITKDGVTVAKSISFQAKAKNIGAELVKQVASATNKVAGDGTTCATVLTQAILIEGCKSVAAGVNVMDLRVGINMAIAAVVSDLKSRAVMISTPEEITQVATISANGEREIGELIARAMEKVGKEGVITVADGNTLDNELEVVEGMKLARGYISPYFITDEKTQKCELENPIILIHEKKISDINSLLKVLEAAVKSSRPLLIVAEDVESDALAMLILNKHHGGLKVCAIKAPGFGDNRKASLDDLAVLTGAEVISEERGLSLEKIRPELLGTAKKVTVTRDDTIILHGGGDKKLIEERCEELRSANEKSTSTFDQEKTQERLSKLSGGVAVFKVGGASESEVGERKDRVTDALNATRAAVEEGIIPGGGVALLYATKALDNLQTENEDQRRGVQIVQNALKAPAFTIAANAGYDGSLVVGKLLEQDDCNFGFDAAKGKYVDMVKAGIIDPVKVIRTALTDAASVSLLLTTTEASVLVKADENTPNHVPDMASMGM.

Residues 1–31 (MYRVLSKLSSSIGSSTSRKLVSGRIISSRNY) constitute a mitochondrion transit peptide.

This sequence belongs to the chaperonin (HSP60) family.

The protein localises to the mitochondrion. Implicated in mitochondrial protein import and macromolecular assembly. May facilitate the correct folding of imported proteins. May also prevent misfolding and promote the refolding and proper assembly of unfolded polypeptides generated under stress conditions in the mitochondrial matrix. In Arabidopsis thaliana (Mouse-ear cress), this protein is Chaperonin CPN60-like 2, mitochondrial.